A 94-amino-acid polypeptide reads, in one-letter code: Nucleoid-associated protein MYPE8070 (94 aa).

It belongs to the YbaB/EbfC family. Homodimer.

The protein resides in the cytoplasm. The protein localises to the nucleoid. Functionally, binds to DNA and alters its conformation. May be involved in regulation of gene expression, nucleoid organization and DNA protection. In Malacoplasma penetrans (strain HF-2) (Mycoplasma penetrans), this protein is Nucleoid-associated protein MYPE8070.